The primary structure comprises 361 residues: UDP-N-acetylglucosamine--N-acetylmuramyl-(pentapeptide) pyrophosphoryl-undecaprenol N-acetylglucosamine transferase (361 aa).

Residues 11–13 (TGG), asparagine 120, arginine 161, serine 188, and glutamine 282 contribute to the UDP-N-acetyl-alpha-D-glucosamine site.

The protein belongs to the glycosyltransferase 28 family. MurG subfamily.

The protein resides in the cell inner membrane. It carries out the reaction di-trans,octa-cis-undecaprenyl diphospho-N-acetyl-alpha-D-muramoyl-L-alanyl-D-glutamyl-meso-2,6-diaminopimeloyl-D-alanyl-D-alanine + UDP-N-acetyl-alpha-D-glucosamine = di-trans,octa-cis-undecaprenyl diphospho-[N-acetyl-alpha-D-glucosaminyl-(1-&gt;4)]-N-acetyl-alpha-D-muramoyl-L-alanyl-D-glutamyl-meso-2,6-diaminopimeloyl-D-alanyl-D-alanine + UDP + H(+). Its pathway is cell wall biogenesis; peptidoglycan biosynthesis. Functionally, cell wall formation. Catalyzes the transfer of a GlcNAc subunit on undecaprenyl-pyrophosphoryl-MurNAc-pentapeptide (lipid intermediate I) to form undecaprenyl-pyrophosphoryl-MurNAc-(pentapeptide)GlcNAc (lipid intermediate II). In Prochlorococcus marinus (strain MIT 9303), this protein is UDP-N-acetylglucosamine--N-acetylmuramyl-(pentapeptide) pyrophosphoryl-undecaprenol N-acetylglucosamine transferase.